Consider the following 299-residue polypeptide: Probable lipid kinase YegS-like (299 aa).

The DAGKc domain occupies 1-129; it reads MSERKALLIL…IDLGEVGGQM (129 aa). Residues Thr39, 65 to 71, and Thr92 each bind ATP; that span reads GDGTLRD. Mg(2+) contacts are provided by Leu210, Asp213, and Leu215. The active-site Proton acceptor is the Glu268.

This sequence belongs to the diacylglycerol/lipid kinase family. YegS lipid kinase subfamily. The cofactor is Mg(2+). Ca(2+) serves as cofactor.

It localises to the cytoplasm. Its function is as follows. Probably phosphorylates lipids; the in vivo substrate is unknown. The chain is Probable lipid kinase YegS-like from Pseudomonas fluorescens (strain ATCC BAA-477 / NRRL B-23932 / Pf-5).